The chain runs to 227 residues: MANYYEVLGVQSSASPEDIKKAYRKLALRWHPDKNPDNKEEAEKKFKQVSEAYEVLSDSKKRSVYDRAGCDRWRAGGGANVPHSSPFGAGYPFRNPEDIFREFFGGLDPFSFEFWDTPFSGRGRPHGLHRVFPSGFGEFPAFMEALSSFNTLGHGGGSRSTFSSASFGGSGSSGFKSVMSSTEMVNGRKVTTKRIIENGQERVEVEEDGQLRSVTVNGKEKLMRVDK.

The J domain maps to 3–69; it reads NYYEVLGVQS…KKRSVYDRAG (67 aa).

In terms of assembly, interacts with histone deacetylases HDAC4, HDAC6, and SIRT2, HDAC activity is required for antiaggregation.

Functionally, efficient suppressor of aggregation and toxicity of disease-associated polyglutamine proteins. In Mus musculus (Mouse), this protein is DnaJ homolog subfamily B member 8 (Dnajb8).